The sequence spans 165 residues: 6,7-dimethyl-8-ribityllumazine synthase (165 aa).

Residues F24, 62–64 (AFE), and 86–88 (AVI) contribute to the 5-amino-6-(D-ribitylamino)uracil site. Position 91–92 (91–92 (DT)) interacts with (2S)-2-hydroxy-3-oxobutyl phosphate. The Proton donor role is filled by H94. F119 contributes to the 5-amino-6-(D-ribitylamino)uracil binding site. Residue R133 coordinates (2S)-2-hydroxy-3-oxobutyl phosphate.

It belongs to the DMRL synthase family.

The catalysed reaction is (2S)-2-hydroxy-3-oxobutyl phosphate + 5-amino-6-(D-ribitylamino)uracil = 6,7-dimethyl-8-(1-D-ribityl)lumazine + phosphate + 2 H2O + H(+). Its pathway is cofactor biosynthesis; riboflavin biosynthesis; riboflavin from 2-hydroxy-3-oxobutyl phosphate and 5-amino-6-(D-ribitylamino)uracil: step 1/2. Functionally, catalyzes the formation of 6,7-dimethyl-8-ribityllumazine by condensation of 5-amino-6-(D-ribitylamino)uracil with 3,4-dihydroxy-2-butanone 4-phosphate. This is the penultimate step in the biosynthesis of riboflavin. This chain is 6,7-dimethyl-8-ribityllumazine synthase, found in Prochlorococcus marinus (strain MIT 9303).